The following is a 397-amino-acid chain: uncharacterized protein (397 aa).

4 helical membrane-spanning segments follow: residues 22–42 (ILTMLGIIIGVGSVIVVVAVG), 270–290 (IMTTIIGSIAGISLLVGGIGV), 327–347 (VVLTLIGGLVGIGIGYGGAAL), and 362–382 (VVCGGVLFSMLIGVIFGMLPA).

This sequence belongs to the ABC-4 integral membrane protein family. As to quaternary structure, part of a complex composed of YknX, YknY and YknZ. The complex interacts with YknW.

It is found in the cell membrane. The protein resides in the membrane raft. Functionally, part of an unusual four-component transporter, which is required for protection against the killing factor SdpC (sporulation-delaying protein). This is an uncharacterized protein from Bacillus subtilis (strain 168).